Reading from the N-terminus, the 318-residue chain is Coproporphyrin III ferrochelatase (318 aa).

Fe(2+) contacts are provided by H186 and E268.

Belongs to the ferrochelatase family.

It localises to the cytoplasm. The enzyme catalyses Fe-coproporphyrin III + 2 H(+) = coproporphyrin III + Fe(2+). The protein operates within porphyrin-containing compound metabolism; protoheme biosynthesis. Involved in coproporphyrin-dependent heme b biosynthesis. Catalyzes the insertion of ferrous iron into coproporphyrin III to form Fe-coproporphyrin III. This chain is Coproporphyrin III ferrochelatase, found in Lactococcus lactis subsp. cremoris (strain SK11).